The primary structure comprises 438 residues: Polycomb protein eed-B (438 aa).

A disordered region spans residues 1-70 (MSEASGRAAG…GRKGWGKGKW (70 aa)). Residues 40 to 57 (SIESGTNTERPDTPTNAA) are compositionally biased toward polar residues. WD repeat units follow at residues 88–131 (DHNQ…DIRL), 139–182 (DADE…CIKH), 185–225 (GHGN…LVAI), 231–270 (GHRD…MKTA), 301–338 (IHRN…DDIE), 356–396 (SQCD…PHKA), and 405–438 (KCAS…DRLR).

This sequence belongs to the WD repeat ESC family. As to quaternary structure, component of the prc2/eed-ezh2 complex. Can interact with ezh2, hdac1 and taf9. Interacts with yy1.

The protein localises to the nucleus. Its function is as follows. Polycomb group (PcG) protein. Component of the prc2/eed-ezh2 complex, which methylates 'Lys-9' and 'Lys-27' of histone H3, leading to transcriptional repression of the affected target gene. May play a role in neural induction. The chain is Polycomb protein eed-B (eed-b) from Xenopus laevis (African clawed frog).